The primary structure comprises 255 residues: F-box/SPRY domain-containing protein 1 (255 aa).

The region spanning 3–51 (DPVAALCNYNVLEVIFSYLELDDLSHCSQVCKSWYHFLNDENSDVWRWH) is the F-box domain. In terms of domain architecture, B30.2/SPRY spans 61-253 (LKSDLLSSVS…VSMVYLGTPL (193 aa)).

Belongs to the FBXO45/Fsn family. In terms of assembly, component of an E3 ubiquitin ligase complex composed of hiw and Fsn.

It is found in the synapse. It participates in protein modification; protein ubiquitination. Its function is as follows. Required in the presynaptic motoneuron to down-regulate the levels of wnd and restrain synaptic terminal growth at the neuromuscular junction (NMJ). The polypeptide is F-box/SPRY domain-containing protein 1 (Drosophila simulans (Fruit fly)).